A 576-amino-acid chain; its full sequence is Arginine--tRNA ligase (576 aa).

The short motif at Ala126–His136 is the 'HIGH' region element.

This sequence belongs to the class-I aminoacyl-tRNA synthetase family. Monomer.

The protein resides in the cytoplasm. It carries out the reaction tRNA(Arg) + L-arginine + ATP = L-arginyl-tRNA(Arg) + AMP + diphosphate. This chain is Arginine--tRNA ligase, found in Rickettsia canadensis (strain McKiel).